A 123-amino-acid polypeptide reads, in one-letter code: D-ribose pyranase (123 aa).

The active-site Proton donor is His20. Substrate is bound by residues Asp28, His90, and 112–114 (YAN).

The protein belongs to the RbsD / FucU family. RbsD subfamily. As to quaternary structure, homodecamer.

Its subcellular location is the cytoplasm. The enzyme catalyses beta-D-ribopyranose = beta-D-ribofuranose. It functions in the pathway carbohydrate metabolism; D-ribose degradation; D-ribose 5-phosphate from beta-D-ribopyranose: step 1/2. In terms of biological role, catalyzes the interconversion of beta-pyran and beta-furan forms of D-ribose. The protein is D-ribose pyranase of Corynebacterium glutamicum (strain R).